Here is a 186-residue protein sequence, read N- to C-terminus: ATP-dependent protease subunit HslV (186 aa).

Threonine 14 is a catalytic residue. Residues alanine 168, cysteine 171, and threonine 174 each coordinate Na(+).

The protein belongs to the peptidase T1B family. HslV subfamily. In terms of assembly, a double ring-shaped homohexamer of HslV is capped on each side by a ring-shaped HslU homohexamer. The assembly of the HslU/HslV complex is dependent on binding of ATP.

The protein resides in the cytoplasm. The enzyme catalyses ATP-dependent cleavage of peptide bonds with broad specificity.. With respect to regulation, allosterically activated by HslU binding. Protease subunit of a proteasome-like degradation complex believed to be a general protein degrading machinery. This chain is ATP-dependent protease subunit HslV, found in Bradyrhizobium diazoefficiens (strain JCM 10833 / BCRC 13528 / IAM 13628 / NBRC 14792 / USDA 110).